We begin with the raw amino-acid sequence, 371 residues long: GTPase Obg (371 aa).

The region spanning 1–159 (MKFLDQAKVY…KTIWLRLKLI (159 aa)) is the Obg domain. In terms of domain architecture, OBG-type G spans 160-327 (ADAGLVGLPN…VLRALRDIIV (168 aa)). GTP contacts are provided by residues 166–173 (GLPNAGKS), 191–195 (FTTLH), 212–215 (DIPG), 279–282 (SQID), and 308–310 (SAI). Residues serine 173 and threonine 193 each contribute to the Mg(2+) site. The segment at 337–371 (APMKALKVRHRDMQSSGNEGESEDNSDRDDEEQQG) is disordered. The span at 356-371 (GESEDNSDRDDEEQQG) shows a compositional bias: acidic residues.

The protein belongs to the TRAFAC class OBG-HflX-like GTPase superfamily. OBG GTPase family. As to quaternary structure, monomer. Mg(2+) serves as cofactor.

Its subcellular location is the cytoplasm. Functionally, an essential GTPase which binds GTP, GDP and possibly (p)ppGpp with moderate affinity, with high nucleotide exchange rates and a fairly low GTP hydrolysis rate. Plays a role in control of the cell cycle, stress response, ribosome biogenesis and in those bacteria that undergo differentiation, in morphogenesis control. The chain is GTPase Obg from Rhizobium rhizogenes (strain K84 / ATCC BAA-868) (Agrobacterium radiobacter).